The sequence spans 60 residues: Large ribosomal subunit protein bL32 (60 aa).

A compositionally biased stretch (basic residues) spans 1 to 16 (MAVPKRKTSPSKRGMR). Residues 1 to 60 (MAVPKRKTSPSKRGMRRSADALKAPTYVEDKNSGELRRPHHVDLKTGMYRGRQVLEPKEA) are disordered. Positions 28-44 (VEDKNSGELRRPHHVDL) are enriched in basic and acidic residues.

It belongs to the bacterial ribosomal protein bL32 family.

This is Large ribosomal subunit protein bL32 from Chelativorans sp. (strain BNC1).